A 302-amino-acid chain; its full sequence is Glycine--tRNA ligase alpha subunit (302 aa).

Belongs to the class-II aminoacyl-tRNA synthetase family. In terms of assembly, tetramer of two alpha and two beta subunits.

The protein localises to the cytoplasm. It carries out the reaction tRNA(Gly) + glycine + ATP = glycyl-tRNA(Gly) + AMP + diphosphate. This is Glycine--tRNA ligase alpha subunit from Xanthomonas campestris pv. campestris (strain 8004).